The primary structure comprises 448 residues: Trk system potassium uptake protein TrkA homolog 2 (448 aa).

The 124-residue stretch at 1–124 (MKAVVIGAGE…RAQVGVDIMI (124 aa)) folds into the RCK N-terminal 1 domain. NAD(+) contacts are provided by residues 7 to 11 (GAGEV), E29, 70 to 71 (TG), and R101. The 82-residue stretch at 144–225 (IDAEMFAGGK…MADLENVFGN (82 aa)) folds into the RCK C-terminal 1 domain. The 119-residue stretch at 230–348 (RNRILLIGCG…FEMVGIDIAV (119 aa)) folds into the RCK N-terminal 2 domain. An NAD(+)-binding site is contributed by 232–262 (RILLIGCGIVGFYLAKIIDKDENADLKVIEY). Residues 368-448 (EALATIEGEK…AVRSVEKLFK (81 aa)) enclose the RCK C-terminal 2 domain.

Part of a potassium transport system. The sequence is that of Trk system potassium uptake protein TrkA homolog 2 (trkA2) from Methanosarcina mazei (strain ATCC BAA-159 / DSM 3647 / Goe1 / Go1 / JCM 11833 / OCM 88) (Methanosarcina frisia).